Here is a 223-residue protein sequence, read N- to C-terminus: Germin-like protein subfamily 1 member 10 (223 aa).

Positions 1–24 (MAMKSLSFLAALSLLALTLPLTIA) are cleaved as a signal peptide. An intrachain disulfide couples C34 to C51. Residue N38 is glycosylated (N-linked (GlcNAc...) asparagine). Positions 65–215 (PGLQTARPIT…AFQVDPRVVM (151 aa)) constitute a Cupin type-1 domain. 4 residues coordinate Mn(2+): H113, H115, E120, and H161.

The protein belongs to the germin family. As to quaternary structure, oligomer (believed to be a pentamer but probably hexamer).

Its subcellular location is the secreted. The protein resides in the extracellular space. It localises to the apoplast. Functionally, may play a role in plant defense. Probably has no oxalate oxidase activity even if the active site is conserved. This is Germin-like protein subfamily 1 member 10 from Arabidopsis thaliana (Mouse-ear cress).